The chain runs to 74 residues: Alpha-conotoxin GeXIVA (74 aa).

Residues 1 to 22 (MKLTCVLIITVLFLTACQLTTA) form the signal peptide. A propeptide spanning residues 23–46 (VTYSRGEHKHRALMSTGTNYRLPK) is cleaved from the precursor. Positions 56 to 64 (RSPYDRRRR) are interacts with alpha-9-alpha-10 (CHRNA9-CHRNA10) nAChR.

This sequence belongs to the conotoxin O1 superfamily. The native disulfide bond pairing has not been studied. Three isomers may exist: the bead isomer (I-II; III-IV), the globular isomer (I-III; II-IV), the ribbon isomer (I-IV; II-III). They have all been synthesized and their activity tested. All of them show similar potency on alpha-9-alpha-10 (CHRNA9-CHRNA10) nAChR, showing that disulfide bonds does not significantly affect their activity. In addition, removal of disulfide bonds does not affect the activity on alpha-9-alpha-10 (CHRNA9-CHRNA10) nAChR either. In terms of tissue distribution, expressed by the venom duct.

It is found in the secreted. In terms of biological role, alpha-conotoxins act on postsynaptic membranes, they bind to the nicotinic acetylcholine receptors (nAChR) and thus inhibit them. This toxin is very potent on alpha-9-alpha-10/CHRNA9-CHRNA10 nAChR (IC(50)=4.61-12 nM for the bead isomer (I-II; III-IV), IC(50)=7-16 nM for the ribbon isomer (I-IV; II-III) and IC(50)=22.7 nM for the globular isomer (I-III; II-IV)). The bead isomer also shows a weak inhibition on other nAChRs (alpha-1-beta-1-delta-epsilon/CHRNA1-CHRNB1-CHRND-CHRNE, alpha-7/CHRNA7, alpha-6/alpha-3-beta-2-beta-3 (CHRNA6/CHRNA3-CHRNB2-CHRNB3), alpha-3-beta-2/CHRNA3-CHRNB2, alpha-2-beta-2/CHRNA2-CHRNB2, alpha-6/alpha-3-beta-4 (CHRNA6/CHRNA3-CHRNB4), alpha-4-beta-2/CHRNA4-CHRNB2, alpha-4-beta-4/CHRNA4-CHRNB4, alpha-2-beta-4/CHRNA2-CHRNB4, alpha-3-beta-4/CHRNA3-CHRNB4). The toxin blockade is voltage-dependent, and its binding site does not overlap with the binding site of the competitive antagonist alpha-conotoxin RgIA. The toxin inhibits Sf9 cell growth. Both the bead and ribbon isomers relieve pain effects in the rat chronic constriction injury (CCI) model of neuropathic pain, and in the acute pain model of tail flick test, but have no effect on motor performance. The polypeptide is Alpha-conotoxin GeXIVA (Conus generalis (General cone)).